We begin with the raw amino-acid sequence, 356 residues long: Probable protein phosphatase 2C T23F11.1 (356 aa).

The 264-residue stretch at 23–286 (LVGSSCMQGW…DNMTVVLVGL (264 aa)) folds into the PPM-type phosphatase domain. Residues D59, G60, D228, and D277 each coordinate Mn(2+). Positions 336–356 (NAANQEEEEDDNEPAPANFQV) are disordered.

This sequence belongs to the PP2C family. Requires Mg(2+) as cofactor. It depends on Mn(2+) as a cofactor.

It carries out the reaction O-phospho-L-seryl-[protein] + H2O = L-seryl-[protein] + phosphate. The enzyme catalyses O-phospho-L-threonyl-[protein] + H2O = L-threonyl-[protein] + phosphate. The protein is Probable protein phosphatase 2C T23F11.1 (ppm-2) of Caenorhabditis elegans.